Here is a 295-residue protein sequence, read N- to C-terminus: UDP-N-acetylenolpyruvoylglucosamine reductase (295 aa).

Residues 23-188 enclose the FAD-binding PCMH-type domain; the sequence is KVGGPADFLA…ISAKFALKPG (166 aa). R167 is an active-site residue. S217 (proton donor) is an active-site residue. E287 is a catalytic residue.

This sequence belongs to the MurB family. Requires FAD as cofactor.

The protein resides in the cytoplasm. It catalyses the reaction UDP-N-acetyl-alpha-D-muramate + NADP(+) = UDP-N-acetyl-3-O-(1-carboxyvinyl)-alpha-D-glucosamine + NADPH + H(+). It participates in cell wall biogenesis; peptidoglycan biosynthesis. Functionally, cell wall formation. This Streptococcus pyogenes serotype M12 (strain MGAS9429) protein is UDP-N-acetylenolpyruvoylglucosamine reductase.